Consider the following 73-residue polypeptide: Potassium channel toxin alpha-KTx 27.1 (73 aa).

The N-terminal stretch at 1–23 (MKFLFLTLFVCCFIAVLVIPSEA) is a signal peptide.

This sequence belongs to the short scorpion toxin superfamily. Potassium channel inhibitor family. Alpha-KTx 27 subfamily. Contains 4 disulfide bonds. In terms of tissue distribution, expressed by the venom gland.

The protein resides in the secreted. The chain is Potassium channel toxin alpha-KTx 27.1 from Buthus israelis (Israeli scorpion).